Here is a 390-residue protein sequence, read N- to C-terminus: MSSTTTNTTTATPAIQVNGNQSSSPQSPSSSTSTLSPPMSPSLLTRYREQKAVNKQIEKQLKEEKKIMDSELKLLLLGTGDSGKSTVVKQMKILHLEGYSQEERINQRQFVYRNIIEIAYSIIRGCGVLNLTIPSQFDSICSSIEEIYETKNYTNLDKNVLKGVAELSKNESFINAANNSGSNFQLHSSSQYFLDDIARFSEEDYIPTDQDILYTRVASTSVSETRFSVRGIKFRMIDVAGQRGHRDKWIHHFSEVTAILFVISLCEYDQVLEEDGKTNRMIESIKVFGDIINQRWFKDIPIILFLNKRDLFAEKIKKTGISICFPDYTGPSDDYEQSLVFLKKKILSANKTSKAVYTNVTTATDTTNIGHVFEAVKDILTRQTMEEGGI.

Low complexity-rich tracts occupy residues 1-12 (MSSTTTNTTTAT) and 22-42 (SSSP…MSPS). Residues 1–42 (MSSTTTNTTTATPAIQVNGNQSSSPQSPSSSTSTLSPPMSPS) form a disordered region. The region spanning 70–390 (SELKLLLLGT…TRQTMEEGGI (321 aa)) is the G-alpha domain. The G1 motif stretch occupies residues 73–86 (KLLLLGTGDSGKST). GTP is bound by residues 78-85 (GTGDSGKS), 213-219 (LYTRVAS), 238-242 (DVAGQ), 307-310 (NKRD), and Ala363. Ser85 provides a ligand contact to Mg(2+). A G2 motif region spans residues 211–219 (DILYTRVAS). Positions 234–243 (FRMIDVAGQR) are G3 motif. The G4 motif stretch occupies residues 303-310 (ILFLNKRD). The tract at residues 361 to 366 (TTATDT) is G5 motif.

Belongs to the G-alpha family. G proteins are composed of 3 units; alpha, beta and gamma. The alpha chain contains the guanine nucleotide binding site.

In terms of biological role, guanine nucleotide-binding proteins (G proteins) are involved as modulators or transducers in various transmembrane signaling systems. This Dictyostelium discoideum (Social amoeba) protein is Guanine nucleotide-binding protein alpha-7 subunit (gpaG).